A 142-amino-acid chain; its full sequence is MAKKIQAIVKLQVSAGMANPSPPVGPALGQQGVNIMEFCKAFNAKTEPLEKGLPIPVVITVYADRSFTFETKTVPAAVLLLKAAGVKSGSPKPNTNKIGKVTKTQVREIAETKQADMTGTSIDANIQSILGTARSMGLEVEE.

The protein belongs to the universal ribosomal protein uL11 family. As to quaternary structure, part of the ribosomal stalk of the 50S ribosomal subunit. Interacts with L10 and the large rRNA to form the base of the stalk. L10 forms an elongated spine to which L12 dimers bind in a sequential fashion forming a multimeric L10(L12)X complex. One or more lysine residues are methylated.

Functionally, forms part of the ribosomal stalk which helps the ribosome interact with GTP-bound translation factors. In Hamiltonella defensa subsp. Acyrthosiphon pisum (strain 5AT), this protein is Large ribosomal subunit protein uL11.